Reading from the N-terminus, the 189-residue chain is Thymidylate kinase (189 aa).

7-14 is an ATP binding site; it reads GIDTAGKS.

This sequence belongs to the thymidylate kinase family.

It catalyses the reaction dTMP + ATP = dTDP + ADP. Phosphorylation of dTMP to form dTDP in both de novo and salvage pathways of dTTP synthesis. In Aliarcobacter butzleri (strain RM4018) (Arcobacter butzleri), this protein is Thymidylate kinase.